Reading from the N-terminus, the 425-residue chain is UDP-sugar transporter protein SLC35A5 (425 aa).

Residues 1-7 are Cytoplasmic-facing; sequence MESNCGH. The helical transmembrane segment at 8-28 threads the bilayer; sequence PMLSVSSAMYTFLLGAIFITL. The Lumenal portion of the chain corresponds to 29 to 52; that stretch reads SSSRILLVKYSANEENKYDYLPTT. The helical transmembrane segment at 53-73 threads the bilayer; the sequence is VNVCSELVKLVFCALVSFWVL. Residues 74–92 lie on the Cytoplasmic side of the membrane; sequence KKEDHQNRKLRCGSWKEFF. A helical transmembrane segment spans residues 93-115; that stretch reads NFMKWSIPAFLYFLDNLIVFYVL. Residues 116–119 are Lumenal-facing; it reads SYLQ. Residues 120–142 traverse the membrane as a helical segment; sequence PAMAVIFSNFSIITTALLFRIVL. Residues 143–147 are Cytoplasmic-facing; the sequence is KRHLN. Residues 148 to 168 traverse the membrane as a helical segment; that stretch reads GIQWASLLILFLSIVALTSGT. Topologically, residues 169–228 are lumenal; it reads ETSQHSLAGHGFHHDALFSPSNSCLLFRSECPRKDNCTAKEWTFSEAQWNTTARVFSHIR. N-linked (GlcNAc...) asparagine glycans are attached at residues N204 and N218. Residues 229–249 form a helical membrane-spanning segment; it reads LGLGHVLIIVQCFISSMANIY. The Cytoplasmic portion of the chain corresponds to 250 to 263; that stretch reads NEKILKEGNQLTES. The chain crosses the membrane as a helical span at residues 264-284; sequence IFVQNSKLYFFGVLFNGLTLG. Topologically, residues 285-303 are lumenal; that stretch reads LQSGNRDQIKNCGIFYGHN. The chain crosses the membrane as a helical span at residues 304–324; sequence AFSVALIFVTAFQGLSVAFIL. At 325–330 the chain is on the cytoplasmic side; the sequence is KFLDNM. The helical transmembrane segment at 331 to 351 threads the bilayer; the sequence is FHVLMAQVTTVVITTVSVLVF. Over 352-354 the chain is Lumenal; that stretch reads DFR. Residues 355–375 form a helical membrane-spanning segment; sequence PSLEFFLEAPSVLLSILIYNA. The Cytoplasmic segment spans residues 376–425; it reads SNPQGVENVPRKERIRDLSGTLWERSSGDGEELERLTKPKSDIESDEDTF. S394, S416, and S420 each carry phosphoserine. A disordered region spans residues 398–425; it reads WERSSGDGEELERLTKPKSDIESDEDTF. Residues 408–418 show a composition bias toward basic and acidic residues; that stretch reads LERLTKPKSDI.

It belongs to the nucleotide-sugar transporter family. SLC35A subfamily. As to quaternary structure, probably forms homooligomers and heterooligomers with SLC35A1, SLC35A2, SLC35A3 and SLC35A4.

The protein resides in the golgi apparatus membrane. The enzyme catalyses UMP(out) + UDP-alpha-D-glucuronate(in) = UMP(in) + UDP-alpha-D-glucuronate(out). It catalyses the reaction UMP(out) + UDP-N-acetyl-alpha-D-glucosamine(in) = UMP(in) + UDP-N-acetyl-alpha-D-glucosamine(out). The catalysed reaction is UDP-N-acetyl-alpha-D-galactosamine(in) + UMP(out) = UDP-N-acetyl-alpha-D-galactosamine(out) + UMP(in). Its function is as follows. Probable UDP-sugar:UMP transmembrane antiporter involved in UDP-alpha-D-glucuronate/UDP-GlcA, UDP-GlcNAc/UDP-N-acetyl-alpha-D-glucosamine and UDP-N-acetyl-alpha-D-galactosamine/UDP-GalNAc transport from the cytosol to the lumen of the Golgi. The chain is UDP-sugar transporter protein SLC35A5 from Bos taurus (Bovine).